Consider the following 152-residue polypeptide: Small ribosomal subunit protein uS15 (152 aa).

Belongs to the universal ribosomal protein uS15 family. In terms of assembly, part of the 30S ribosomal subunit.

This is Small ribosomal subunit protein uS15 from Saccharolobus solfataricus (strain ATCC 35092 / DSM 1617 / JCM 11322 / P2) (Sulfolobus solfataricus).